The primary structure comprises 262 residues: Tropinone reductase homolog At2g29290 (262 aa).

13–37 (LVTGGTKGIGEAVVEELSILGARVH) contributes to the NADP(+) binding site. Ser146 is a binding site for substrate. The active-site Proton acceptor is the Tyr159.

Belongs to the short-chain dehydrogenases/reductases (SDR) family. SDR65C subfamily.

The chain is Tropinone reductase homolog At2g29290 from Arabidopsis thaliana (Mouse-ear cress).